The sequence spans 194 residues: Insertion element IS136 uncharacterized 21.2 kDa protein (194 aa).

Positions 73–103 (SCDRACAPTPGRDPPVSSLPNSRQPARQNPR) are disordered. Positions 90-103 (SLPNSRQPARQNPR) are enriched in polar residues.

This chain is Insertion element IS136 uncharacterized 21.2 kDa protein, found in Agrobacterium tumefaciens (strain T37).